The chain runs to 205 residues: Thiamine-phosphate synthase (205 aa).

4-amino-2-methyl-5-(diphosphooxymethyl)pyrimidine is bound by residues 37–41 and Asn-69; that span reads QVREK. Asp-70 and Asp-89 together coordinate Mg(2+). Position 108 (Ser-108) interacts with 4-amino-2-methyl-5-(diphosphooxymethyl)pyrimidine. A 2-[(2R,5Z)-2-carboxy-4-methylthiazol-5(2H)-ylidene]ethyl phosphate-binding site is contributed by 134–136; sequence TGS. Residue Lys-137 participates in 4-amino-2-methyl-5-(diphosphooxymethyl)pyrimidine binding. Residues Gly-165 and 185 to 186 contribute to the 2-[(2R,5Z)-2-carboxy-4-methylthiazol-5(2H)-ylidene]ethyl phosphate site; that span reads IS.

Belongs to the thiamine-phosphate synthase family. Mg(2+) serves as cofactor.

It carries out the reaction 2-[(2R,5Z)-2-carboxy-4-methylthiazol-5(2H)-ylidene]ethyl phosphate + 4-amino-2-methyl-5-(diphosphooxymethyl)pyrimidine + 2 H(+) = thiamine phosphate + CO2 + diphosphate. The catalysed reaction is 2-(2-carboxy-4-methylthiazol-5-yl)ethyl phosphate + 4-amino-2-methyl-5-(diphosphooxymethyl)pyrimidine + 2 H(+) = thiamine phosphate + CO2 + diphosphate. It catalyses the reaction 4-methyl-5-(2-phosphooxyethyl)-thiazole + 4-amino-2-methyl-5-(diphosphooxymethyl)pyrimidine + H(+) = thiamine phosphate + diphosphate. The protein operates within cofactor biosynthesis; thiamine diphosphate biosynthesis; thiamine phosphate from 4-amino-2-methyl-5-diphosphomethylpyrimidine and 4-methyl-5-(2-phosphoethyl)-thiazole: step 1/1. Functionally, condenses 4-methyl-5-(beta-hydroxyethyl)thiazole monophosphate (THZ-P) and 2-methyl-4-amino-5-hydroxymethyl pyrimidine pyrophosphate (HMP-PP) to form thiamine monophosphate (TMP). This Clostridium botulinum (strain Loch Maree / Type A3) protein is Thiamine-phosphate synthase.